The primary structure comprises 120 residues: Large ribosomal subunit protein bL20 (120 aa).

Belongs to the bacterial ribosomal protein bL20 family.

Binds directly to 23S ribosomal RNA and is necessary for the in vitro assembly process of the 50S ribosomal subunit. It is not involved in the protein synthesizing functions of that subunit. This chain is Large ribosomal subunit protein bL20, found in Novosphingobium aromaticivorans (strain ATCC 700278 / DSM 12444 / CCUG 56034 / CIP 105152 / NBRC 16084 / F199).